Consider the following 447-residue polypeptide: BAG family molecular chaperone regulator 5 (447 aa).

5 BAG domains span residues 9–86 (SISR…EQNA), 95–167 (QNIF…EDCM), 182–260 (SVAK…DLEE), 275–350 (SILK…DLKE), and 365–442 (SHKA…DLKS).

Binds to the ATPase domain of HSP/HSP70 chaperones. Binds PRKN. Interacts with HSPA8 and JPH2. Expressed in the heart.

Co-chaperone for HSP/HSP70 proteins. It functions as a nucleotide-exchange factor promoting the release of ADP from HSP70, thereby activating HSP70-mediated protein refolding. Has an essential role in maintaining proteostasis at junctional membrane complexes (JMC), where it may function as a scaffold between the HSPA8 chaperone and JMC proteins enabling correct, HSPA8-dependent JMC protein folding. Inhibits both auto-ubiquitination of PRKN and ubiquitination of target proteins by PRKN. This is BAG family molecular chaperone regulator 5 (BAG5) from Homo sapiens (Human).